The sequence spans 473 residues: MGQSGRSRHQKRARAQAQLRNLEAYAANPHSFVFTRGCTGRNIRQLSLDVRRVMEPLTASRLQVRKKNSLKDCVAVAGPLGVTHFLILSKTETNVYFKLMRLPGGPTLTFQVKKYSLVRDVVSSLRRHRMHEQQFAHPPLLVLNSFGPHGMHVKLMATMFQNLFPSINVHKVNLNTIKRCLLIDYNPDSQELDFRHYSIKVVPVGASRGMKKLLQEKFPNMSRLQDISELLATGAGLSESEAEPDGDHNITELPQAVAGRGNMRAQQSAVRLTEIGPRMTLQLIKVQEGVGEGKVMFHSFVSKTEEELQAILEAKEKKLRLKAQRQAQQAQNVQRKQEQREAHRKKSLEGMKKARVGGSDEEASGIPSRTASLELGEDDDEQEDDDIEYFCQAVGEAPSEDLFPEAKQKRLAKSPGRKRKRWEMDRGRGRLCDQKFPKTKDKSQGAQARRGPRGASRDGGRGRGRGRPGKRVA.

Residues 29–292 (PHSFVFTRGC…LIKVQEGVGE (264 aa)) form the Brix domain. Ser-238 and Ser-240 each carry phosphoserine. The disordered stretch occupies residues 323–473 (AQRQAQQAQN…GRGRPGKRVA (151 aa)). A compositionally biased stretch (low complexity) spans 324–334 (QRQAQQAQNVQ). Positions 335–352 (RKQEQREAHRKKSLEGMK) are enriched in basic and acidic residues. Ser-359 is subject to Phosphoserine. Over residues 375–388 (LGEDDDEQEDDDIE) the composition is skewed to acidic residues. Residues 409-421 (KRLAKSPGRKRKR) are compositionally biased toward basic residues. Residues 422 to 443 (WEMDRGRGRLCDQKFPKTKDKS) show a composition bias toward basic and acidic residues. At Lys-438 the chain carries N6-acetyllysine. The segment covering 462 to 473 (GRGRGRPGKRVA) has biased composition (basic residues).

Widely expressed.

The protein resides in the nucleus. The protein localises to the nucleolus. Functionally, may have a role in cell growth. This chain is Suppressor of SWI4 1 homolog (PPAN), found in Homo sapiens (Human).